The primary structure comprises 386 residues: Leupaxin (386 aa).

At methionine 1 the chain carries N-acetylmethionine. The LD motif 1 motif lies at glutamate 3–threonine 15. The disordered stretch occupies residues arginine 13–aspartate 41. Position 19 is a phosphoserine (serine 19). At tyrosine 22 the chain carries Phosphotyrosine. At serine 54 the chain carries Phosphoserine. Residue tyrosine 62 is modified to Phosphotyrosine. Short sequence motifs (LD motif) lie at residues asparagine 70–proline 82 and glutamine 92–methionine 103. The residue at position 72 (tyrosine 72) is a Phosphotyrosine; by LYN. Position 81 is a phosphoserine (serine 81). LIM zinc-binding domains are found at residues glycine 150 to serine 208, proline 209 to serine 267, proline 268 to glycine 326, and threonine 327 to leucine 386.

This sequence belongs to the paxillin family. In terms of assembly, interacts with PTPN22. Interacts with unphosphorylated ITGA4. Interacts with PTK2B/PYK2, PTPN12, AR and SRF. Interacts (via LD motif 3) with LYN and the interaction is induced upon B-cell antigen receptor (BCR) activation. Interacts (via LD motif 3) with PTK2/FAK. In terms of processing, phosphorylated on tyrosine residues. Phosphorylation on Tyr-72 is important for its inhibitory function. Bombesin stimulates phosphorylation on Tyr-22, Tyr-62 and Tyr-72. As to expression, macrophages, monocytes and osteoclasts (at protein level). Strongly expressed in cells and tissues of hematopoietic origin. Highest expression in lymphoid tissues such as spleen, lymph node, thymus and appendix and in the vascular smooth muscle. Lower levels in bone marrow and fetal liver. Also expressed in peripheral blood lymphocytes and a number of hematopoietic cell lines. Very low levels found in epithelial cell lines. Expressed in prostate cancer (PCa) cells and its expression intensity is directly linked to PCa progression.

It localises to the cytoplasm. It is found in the cell junction. Its subcellular location is the focal adhesion. The protein localises to the nucleus. The protein resides in the perinuclear region. It localises to the cell projection. It is found in the podosome. Its subcellular location is the cell membrane. Functionally, transcriptional coactivator for androgen receptor (AR) and serum response factor (SRF). Contributes to the regulation of cell adhesion, spreading and cell migration and acts as a negative regulator in integrin-mediated cell adhesion events. Suppresses the integrin-induced tyrosine phosphorylation of paxillin (PXN). May play a critical role as an adapter protein in the formation of the adhesion zone in osteoclasts. Negatively regulates B-cell antigen receptor (BCR) signaling. This chain is Leupaxin (LPXN), found in Homo sapiens (Human).